A 386-amino-acid chain; its full sequence is DNA-directed RNA polymerase subunit Rpo1C (386 aa).

Belongs to the RNA polymerase beta' chain family. As to quaternary structure, part of the RNA polymerase complex.

The protein localises to the cytoplasm. The enzyme catalyses RNA(n) + a ribonucleoside 5'-triphosphate = RNA(n+1) + diphosphate. Its function is as follows. DNA-dependent RNA polymerase (RNAP) catalyzes the transcription of DNA into RNA using the four ribonucleoside triphosphates as substrates. Forms part of the jaw domain. The sequence is that of DNA-directed RNA polymerase subunit Rpo1C from Methanococcus maripaludis (strain C6 / ATCC BAA-1332).